The chain runs to 541 residues: Zingiberene synthase (541 aa).

Mg(2+)-binding residues include Asp-295, Asp-299, Asn-439, Ser-443, and Glu-447. Residues Asp-295–Asp-299 carry the DDXXD motif motif.

Belongs to the terpene synthase family. It depends on Mg(2+) as a cofactor. Requires Mn(2+) as cofactor.

The protein localises to the cytoplasm. The enzyme catalyses (2E,6E)-farnesyl diphosphate = alpha-zingiberene + diphosphate. It functions in the pathway secondary metabolite biosynthesis; terpenoid biosynthesis. Functionally, sesquiterpene synthase converting farnesyl diphosphate into two major products, zingiberene &gt; beta-sesquiphellandrene, and five minor products, 7-epi-sesquithujene, sesquisabinene A, (E)-alpha-bergamotene, (E)-beta-farnesene and beta-bisabolene. Can also accept geranyl diphosphate as substrate, producing nine monoterpenes, with myrcene, limonene and alpha-terpinolene as the major products. The protein is Zingiberene synthase (TPS1) of Sorghum bicolor (Sorghum).